Consider the following 180-residue polypeptide: NADH-quinone oxidoreductase subunit I (180 aa).

4Fe-4S ferredoxin-type domains are found at residues 48–80 (IVLT…LQKA) and 90–119 (EFFR…LTPD). The [4Fe-4S] cluster site is built by Cys60, Cys63, Cys66, Cys70, Cys99, Cys102, Cys105, and Cys109. Positions 160–180 (GKPKGSAQKEAAPIDVKSILP) are disordered.

The protein belongs to the complex I 23 kDa subunit family. As to quaternary structure, NDH-1 is composed of 14 different subunits. Subunits NuoA, H, J, K, L, M, N constitute the membrane sector of the complex. [4Fe-4S] cluster serves as cofactor.

The protein resides in the cell inner membrane. The enzyme catalyses a quinone + NADH + 5 H(+)(in) = a quinol + NAD(+) + 4 H(+)(out). In terms of biological role, NDH-1 shuttles electrons from NADH, via FMN and iron-sulfur (Fe-S) centers, to quinones in the respiratory chain. The immediate electron acceptor for the enzyme in this species is believed to be ubiquinone. Couples the redox reaction to proton translocation (for every two electrons transferred, four hydrogen ions are translocated across the cytoplasmic membrane), and thus conserves the redox energy in a proton gradient. This is NADH-quinone oxidoreductase subunit I from Tolumonas auensis (strain DSM 9187 / NBRC 110442 / TA 4).